Reading from the N-terminus, the 105-residue chain is Small ribosomal subunit protein bS20 (105 aa).

It belongs to the bacterial ribosomal protein bS20 family.

Its function is as follows. Binds directly to 16S ribosomal RNA. This Moorella thermoacetica (strain ATCC 39073 / JCM 9320) protein is Small ribosomal subunit protein bS20.